The primary structure comprises 384 residues: uncharacterized protein (384 aa).

This is an uncharacterized protein from Acanthamoeba polyphaga (Amoeba).